A 654-amino-acid polypeptide reads, in one-letter code: Protein fem-1 homolog A (654 aa).

7 ANK repeats span residues 2–31, 40–70, 82–111, 115–145, 149–178, 182–211, and 214–243; these read DLHT…REEI, GGGT…SVEA, EGAP…SVNR, TNST…DLEV, HGHT…QVNR, KGNT…RMER, and YGMT…GHGQ. Serine 108 is subject to Phosphoserine. The segment at 241 to 265 is disordered; sequence HGQLSGTELPGEGSSQMAGNHCSTP. Residues 253-263 show a composition bias toward polar residues; that stretch reads GSSQMAGNHCS. TPR repeat units follow at residues 283 to 317 and 375 to 408; these read VEAL…RHQG and SYYI…QQNN. ANK repeat units follow at residues 519-561 and 565-594; these read NGFT…DPDS and DNNT…HMDA. Position 608 is a phosphoserine (serine 608).

This sequence belongs to the fem-1 family. Component of a CRL2 E3 ubiquitin-protein ligase complex, also named ECS (Elongin BC-CUL2/5-SOCS-box protein) complex, composed of CUL2, Elongin BC (ELOB and ELOC), RBX1 and substrate-specific adapter FEM1A. Interacts with PTGER4. Interacts with NFKB1; the interaction is direct. In terms of processing, phosphorylated; highly phosphorylated in myoblasts and myotubes. Phosphorylation at Ser-108 and Ser-608 promote PGE2-EP4-mediated inhibition of inflammation. Dephosphorylated by protein phosphatase 2A (PP2A).

It localises to the mitochondrion. Its subcellular location is the cytoplasm. The protein operates within protein modification; protein ubiquitination. Functionally, substrate-recognition component of a Cul2-RING (CRL2) E3 ubiquitin-protein ligase complex of the DesCEND (destruction via C-end degrons) pathway, which recognizes a C-degron located at the extreme C terminus of target proteins, leading to their ubiquitination and degradation. The C-degron recognized by the DesCEND pathway is usually a motif of less than ten residues and can be present in full-length proteins, truncated proteins or proteolytically cleaved forms. The CRL2(FEM1A) complex specifically recognizes proteins with an arginine at the C-terminus: recognizes and binds proteins ending with -Lys/Arg-Xaa-Arg and -Lys/Arg-Xaa-Xaa-Arg C-degrons, such as SIL1 or OR51B2, leading to their ubiquitination and degradation. Involved in PGE2-EP4-mediated inhibition of inflammation of macrophages via interaction with NFKB1 and PTGER4. Promotes inflammation in brain microglia through MAP2K4/MKK4-mediated signaling. The sequence is that of Protein fem-1 homolog A from Rattus norvegicus (Rat).